A 339-amino-acid polypeptide reads, in one-letter code: Dihydroorotate dehydrogenase (quinone) (339 aa).

FMN contacts are provided by residues 62–66 (AGMDK) and threonine 86. Lysine 66 lines the substrate pocket. 111–115 (NRMGF) contributes to the substrate binding site. Residues asparagine 139 and asparagine 172 each contribute to the FMN site. Asparagine 172 provides a ligand contact to substrate. Serine 175 (nucleophile) is an active-site residue. Residue asparagine 177 coordinates substrate. FMN contacts are provided by lysine 217 and threonine 245. Residue 246-247 (NT) participates in substrate binding. Residues glycine 268, glycine 297, and 318 to 319 (YS) each bind FMN.

The protein belongs to the dihydroorotate dehydrogenase family. Type 2 subfamily. In terms of assembly, monomer. The cofactor is FMN.

Its subcellular location is the cell membrane. The catalysed reaction is (S)-dihydroorotate + a quinone = orotate + a quinol. It functions in the pathway pyrimidine metabolism; UMP biosynthesis via de novo pathway; orotate from (S)-dihydroorotate (quinone route): step 1/1. In terms of biological role, catalyzes the conversion of dihydroorotate to orotate with quinone as electron acceptor. The sequence is that of Dihydroorotate dehydrogenase (quinone) from Shewanella baltica (strain OS223).